The sequence spans 392 residues: Isocitrate dehydrogenase [NAD] subunit gamma, mitochondrial (392 aa).

A mitochondrion-targeting transit peptide spans 1–39 (MALKVATAAGGAVKAALRPALLWRPWEVLGSHEAPRRSF). Residues Thr119 and Asn132 each coordinate citrate. 3 residues coordinate substrate: Arg135, Arg166, and Asp253. Position 253 (Asp253) interacts with Mn(2+). 3 residues coordinate ADP: Asn311, Thr312, and Asn323.

This sequence belongs to the isocitrate and isopropylmalate dehydrogenases family. Heterooligomer of subunits alpha (IDH3A), beta (IDH3B), and gamma (IDH3G) in the apparent ratio of 2:1:1. The heterodimer containing one IDH3A and one IDH3B subunit and the heterodimer containing one IDH3A and one IDH3G subunit assemble into a heterotetramer (which contains two subunits of IDH3A, one of IDH3B and one of IDH3G) and further into the heterooctamer. Mg(2+) is required as a cofactor. Mn(2+) serves as cofactor.

The protein localises to the mitochondrion. With respect to regulation, the heterotetramer and the heterodimer composed of IDH3A and IDH3G subunits can be allosterically activated by citrate (CIT) or/and ADP, and the two activators can act independently or synergistically. The heterodimer composed of IDH3A and IDH3B subunits cannot be allosterically regulated and the allosteric regulation of the heterotetramer is through the IDH3G subunit and not the IDH3B subunit. The IDH3G subunit contains the allosteric site which consists of a CIT-binding site and an ADP-binding site, and the binding of CIT and ADP causes conformational changes at the allosteric site which are transmitted to the active site in the catalytic subunit (IDH3A) through a cascade of conformational changes at the heterodimer interface, leading to stabilization of the isocitrate-binding at the active site and thus activation of the enzyme. ATP can activate the heterotetramer and the heterodimer composed of IDH3A and IDH3G subunits at low concentrations but inhibits their activities at high concentrations, whereas ATP exhibits only inhibitory effect on the heterodimer composed of IDH3A and IDH3B subunits. In terms of biological role, regulatory subunit which plays a role in the allosteric regulation of the enzyme catalyzing the decarboxylation of isocitrate (ICT) into alpha-ketoglutarate. The heterodimer composed of the alpha (IDH3A) and beta (IDH3B) subunits and the heterodimer composed of the alpha (IDH3A) and gamma (IDH3G) subunits, have considerable basal activity but the full activity of the heterotetramer (containing two subunits of IDH3A, one of IDH3B and one of IDH3G) requires the assembly and cooperative function of both heterodimers. This is Isocitrate dehydrogenase [NAD] subunit gamma, mitochondrial (IDH3G) from Bos taurus (Bovine).